The primary structure comprises 208 residues: Endoplasmic reticulum vesicle protein 25 (208 aa).

The signal sequence occupies residues Met-1–Ala-15. The Lumenal segment spans residues Leu-16–Arg-177. Residues Gln-28 to Ser-118 enclose the GOLD domain. A helical transmembrane segment spans residues Asn-178–Leu-198. The Cytoplasmic segment spans residues Lys-199–Ile-208.

The protein belongs to the EMP24/GP25L family.

The protein resides in the endoplasmic reticulum membrane. Its subcellular location is the golgi apparatus membrane. Functionally, constituent of COPII-coated endoplasmic reticulum-derived transport vesicles. Required for efficient transport of a subset of secretory proteins to the Golgi. Facilitates retrograde transport from the Golgi to the endoplasmic reticulum. The sequence is that of Endoplasmic reticulum vesicle protein 25 (ERV25) from Candida glabrata (strain ATCC 2001 / BCRC 20586 / JCM 3761 / NBRC 0622 / NRRL Y-65 / CBS 138) (Yeast).